The primary structure comprises 367 residues: MVLSSEASSAADHSAAAPIPTSSWPQLLGRLTEGKHLEPGQAGWAMEQIMSGNARPAQVAAFAVAMKMKVPTAGEVGELADVMLAYARPMPADLIRDDTVDIVGTGGDGVNTVNLSTMASIVVAAAGVPVVKHGNRAASSLAGGADTLESLGVRIDLGPDQVARSLNENGIGFCFAPQFHPSYRQASVVRREIGVPTVFNLLGPLTNPARPRAGLIGCAFADLAEIMAGVFATRGSSVLVVHGDDGLDELTTTTTSTIWRVQAGTVDKLTFDPGDFGFARAELSQLLGGDPQANAAEARAVLGGAAGPVRDAVVLNAAGAIVAHAGLSSRAEWLPAWQDGLQRAAVAIDSGAAEQLLARWVRFSQHV.

Residues 1 to 17 (MVLSSEASSAADHSAAA) show a composition bias toward low complexity. The interval 1 to 22 (MVLSSEASSAADHSAAAPIPTS) is disordered. 5-phospho-alpha-D-ribose 1-diphosphate contacts are provided by residues glycine 104, 107 to 108 (GD), threonine 112, 114 to 117 (NLST), 132 to 140 (KHGNRAASS), and glycine 144. Anthranilate is bound at residue glycine 104. A Mg(2+)-binding site is contributed by serine 116. Asparagine 135 lines the anthranilate pocket. Arginine 190 contacts anthranilate. Aspartate 248 and glutamate 249 together coordinate Mg(2+).

The protein belongs to the anthranilate phosphoribosyltransferase family. In terms of assembly, homodimer. Requires Mg(2+) as cofactor.

The catalysed reaction is N-(5-phospho-beta-D-ribosyl)anthranilate + diphosphate = 5-phospho-alpha-D-ribose 1-diphosphate + anthranilate. The protein operates within amino-acid biosynthesis; L-tryptophan biosynthesis; L-tryptophan from chorismate: step 2/5. In terms of biological role, catalyzes the transfer of the phosphoribosyl group of 5-phosphorylribose-1-pyrophosphate (PRPP) to anthranilate to yield N-(5'-phosphoribosyl)-anthranilate (PRA). This is Anthranilate phosphoribosyltransferase from Mycobacterium ulcerans (strain Agy99).